A 336-amino-acid chain; its full sequence is S-adenosylmethionine:tRNA ribosyltransferase-isomerase (336 aa).

This sequence belongs to the QueA family. Monomer.

The protein resides in the cytoplasm. It carries out the reaction 7-aminomethyl-7-carbaguanosine(34) in tRNA + S-adenosyl-L-methionine = epoxyqueuosine(34) in tRNA + adenine + L-methionine + 2 H(+). It functions in the pathway tRNA modification; tRNA-queuosine biosynthesis. Functionally, transfers and isomerizes the ribose moiety from AdoMet to the 7-aminomethyl group of 7-deazaguanine (preQ1-tRNA) to give epoxyqueuosine (oQ-tRNA). The sequence is that of S-adenosylmethionine:tRNA ribosyltransferase-isomerase from Sulfurihydrogenibium sp. (strain YO3AOP1).